A 185-amino-acid chain; its full sequence is Ribosome-recycling factor (185 aa).

It belongs to the RRF family.

Its subcellular location is the cytoplasm. Its function is as follows. Responsible for the release of ribosomes from messenger RNA at the termination of protein biosynthesis. May increase the efficiency of translation by recycling ribosomes from one round of translation to another. The sequence is that of Ribosome-recycling factor from Chloroflexus aggregans (strain MD-66 / DSM 9485).